The primary structure comprises 409 residues: Killer cell lectin-like receptor subfamily G member 2 (409 aa).

The segment at Met-1–Ala-120 is disordered. Residues Pro-41–Ala-53 show a composition bias toward low complexity. Residues Ser-72–Pro-81 are compositionally biased toward pro residues. Residues Pro-104–Ala-120 are compositionally biased toward low complexity. Ser-158 carries the phosphoserine modification. Residues Thr-193–Pro-216 form a disordered region. The segment covering Arg-202 to Pro-216 has biased composition (low complexity). Residues Trp-263 to Ala-283 form a helical membrane-spanning segment. In terms of domain architecture, C-type lectin spans Ser-300–Ala-405. Disulfide bonds link Cys-321–Cys-404 and Cys-383–Cys-396.

It localises to the membrane. The protein is Killer cell lectin-like receptor subfamily G member 2 (KLRG2) of Homo sapiens (Human).